A 254-amino-acid chain; its full sequence is uncharacterized protein (254 aa).

This is an uncharacterized protein from Aedes vexans (Inland floodwater mosquito).